The primary structure comprises 303 residues: MTRLRIDLAYDGGGFYGWAKQPNLRTVQGTIEDALHKVLRVPTDDAAEPLRLTVAGRTDTGVHASHQVAHLDVSDEVLNRCVGHMTIPVTEALTRRLKAVLPSDIVIHGIAVAPVGFDARFSALERTYVYRVADRSSEVDPRLRGCVLTVDEALDLELMNRAASLTIGLHDFGSFATPNPGGTTIREVKTAYWRRVPITPLVPDEMASHEAYRTPSLESGLVVFTIVADAFARNMVRSLVGSCIKVGSGRKSLEWFAGKMAEPVREGSSGPIAPQGLTLEHIAYPADDQLAARAEAIRAVRTL.

D59 serves as the catalytic Nucleophile. Y128 serves as a coordination point for substrate.

This sequence belongs to the tRNA pseudouridine synthase TruA family. In terms of assembly, homodimer.

It carries out the reaction uridine(38/39/40) in tRNA = pseudouridine(38/39/40) in tRNA. Functionally, formation of pseudouridine at positions 38, 39 and 40 in the anticodon stem and loop of transfer RNAs. This Bifidobacterium longum (strain DJO10A) protein is tRNA pseudouridine synthase A.